Reading from the N-terminus, the 313-residue chain is Dimethyladenosine transferase (313 aa).

S-adenosyl-L-methionine is bound by residues His-37, Leu-39, Gly-64, Glu-85, Asp-113, and Asn-128.

The protein belongs to the class I-like SAM-binding methyltransferase superfamily. rRNA adenine N(6)-methyltransferase family. In terms of assembly, part of the small subunit (SSU) processome, composed of more than 70 proteins and the RNA chaperone small nucleolar RNA (snoRNA) U3.

The protein localises to the nucleus. It is found in the nucleoplasm. It localises to the nucleolus. The enzyme catalyses adenosine(1779)/adenosine(1780) in 18S rRNA + 4 S-adenosyl-L-methionine = N(6)-dimethyladenosine(1779)/N(6)-dimethyladenosine(1780) in 18S rRNA + 4 S-adenosyl-L-homocysteine + 4 H(+). Functionally, specifically dimethylates two adjacent adenosines in the loop of a conserved hairpin near the 3'-end of 18S rRNA in the 40S particle. Involved in the pre-rRNA processing steps leading to small-subunit rRNA production independently of its RNA-modifying catalytic activity. Part of the small subunit (SSU) processome, first precursor of the small eukaryotic ribosomal subunit. During the assembly of the SSU processome in the nucleolus, many ribosome biogenesis factors, an RNA chaperone and ribosomal proteins associate with the nascent pre-rRNA and work in concert to generate RNA folding, modifications, rearrangements and cleavage as well as targeted degradation of pre-ribosomal RNA by the RNA exosome. The polypeptide is Dimethyladenosine transferase (Dimt1) (Mus musculus (Mouse)).